Here is a 260-residue protein sequence, read N- to C-terminus: Acetylglutamate kinase (260 aa).

Substrate-binding positions include glycine 46 to glycine 47, arginine 68, and asparagine 160.

The protein belongs to the acetylglutamate kinase family. ArgB subfamily.

It localises to the cytoplasm. The catalysed reaction is N-acetyl-L-glutamate + ATP = N-acetyl-L-glutamyl 5-phosphate + ADP. The protein operates within amino-acid biosynthesis; L-arginine biosynthesis; N(2)-acetyl-L-ornithine from L-glutamate: step 2/4. Catalyzes the ATP-dependent phosphorylation of N-acetyl-L-glutamate. This Shewanella sp. (strain MR-7) protein is Acetylglutamate kinase.